The sequence spans 356 residues: Uroporphyrinogen decarboxylase (356 aa).

Substrate contacts are provided by residues 27–31, D77, Y154, T209, and H327; that span reads RQAGR.

Belongs to the uroporphyrinogen decarboxylase family. As to quaternary structure, homodimer.

It is found in the cytoplasm. It catalyses the reaction uroporphyrinogen III + 4 H(+) = coproporphyrinogen III + 4 CO2. The protein operates within porphyrin-containing compound metabolism; protoporphyrin-IX biosynthesis; coproporphyrinogen-III from 5-aminolevulinate: step 4/4. Catalyzes the decarboxylation of four acetate groups of uroporphyrinogen-III to yield coproporphyrinogen-III. In Hahella chejuensis (strain KCTC 2396), this protein is Uroporphyrinogen decarboxylase.